The primary structure comprises 494 residues: Probable cytochrome P450 313a4 (494 aa).

C440 serves as a coordination point for heme.

Belongs to the cytochrome P450 family. It depends on heme as a cofactor.

The protein resides in the endoplasmic reticulum membrane. The protein localises to the microsome membrane. May be involved in the metabolism of insect hormones and in the breakdown of synthetic insecticides. The polypeptide is Probable cytochrome P450 313a4 (Cyp313a4) (Drosophila melanogaster (Fruit fly)).